Reading from the N-terminus, the 275-residue chain is MKKVGVIGGGAWGTALALTARRAGRDVVLWAREPQVVDDINVRHVNSDFLPGIDLDPALRATVDLADAADADAVLLVSPAQHLRAAARALAPHWRAGVPAVICSKGIELSTCALMQDAIAAELPQAPIAVLSGPTFAIEVARGLPTAITLACAAPELGRKLVEALGTASFRPYLSDDLVGAQIGGAVKNVLAIACGIVEGRGLGDNARAALITRGLAEMTRLAMAKGGRPETLMGLSGLGDLILTASSTQSRNYSWASPWARAAPWPTSWASAIR.

NADPH contacts are provided by Trp12, Arg32, and Lys105. Sn-glycerol 3-phosphate-binding residues include Lys105, Gly133, and Thr135. Ala137 contacts NADPH. The sn-glycerol 3-phosphate site is built by Lys188, Asp241, Ser251, Arg252, and Asn253. Lys188 serves as the catalytic Proton acceptor. Arg252 is an NADPH binding site.

The protein belongs to the NAD-dependent glycerol-3-phosphate dehydrogenase family.

The protein resides in the cytoplasm. It carries out the reaction sn-glycerol 3-phosphate + NAD(+) = dihydroxyacetone phosphate + NADH + H(+). It catalyses the reaction sn-glycerol 3-phosphate + NADP(+) = dihydroxyacetone phosphate + NADPH + H(+). The protein operates within membrane lipid metabolism; glycerophospholipid metabolism. Functionally, catalyzes the reduction of the glycolytic intermediate dihydroxyacetone phosphate (DHAP) to sn-glycerol 3-phosphate (G3P), the key precursor for phospholipid synthesis. In Paramagnetospirillum magneticum (strain ATCC 700264 / AMB-1) (Magnetospirillum magneticum), this protein is Glycerol-3-phosphate dehydrogenase [NAD(P)+].